A 266-amino-acid chain; its full sequence is 4-hydroxy-tetrahydrodipicolinate reductase (266 aa).

An NAD(+)-binding site is contributed by 10 to 15 (GPRGRM). Lys38 contributes to the NADP(+) binding site. NAD(+)-binding positions include 99-101 (GTT) and 125-128 (APNF). His155 serves as the catalytic Proton donor/acceptor. (S)-2,3,4,5-tetrahydrodipicolinate is bound at residue His156. Catalysis depends on Lys159, which acts as the Proton donor. 165–166 (GT) lines the (S)-2,3,4,5-tetrahydrodipicolinate pocket.

Belongs to the DapB family.

Its subcellular location is the cytoplasm. The enzyme catalyses (S)-2,3,4,5-tetrahydrodipicolinate + NAD(+) + H2O = (2S,4S)-4-hydroxy-2,3,4,5-tetrahydrodipicolinate + NADH + H(+). It catalyses the reaction (S)-2,3,4,5-tetrahydrodipicolinate + NADP(+) + H2O = (2S,4S)-4-hydroxy-2,3,4,5-tetrahydrodipicolinate + NADPH + H(+). Its pathway is amino-acid biosynthesis; L-lysine biosynthesis via DAP pathway; (S)-tetrahydrodipicolinate from L-aspartate: step 4/4. In terms of biological role, catalyzes the conversion of 4-hydroxy-tetrahydrodipicolinate (HTPA) to tetrahydrodipicolinate. The chain is 4-hydroxy-tetrahydrodipicolinate reductase from Bacillus mycoides (strain KBAB4) (Bacillus weihenstephanensis).